We begin with the raw amino-acid sequence, 117 residues long: Protein TCL1B2 (117 aa).

The protein belongs to the TCL1 family.

The polypeptide is Protein TCL1B2 (Tcl1b2) (Mus musculus (Mouse)).